The sequence spans 547 residues: Vacuolar fusion protein MON1 homolog B (547 aa).

Position 1 is an N-acetylmethionine (M1). Residues 1–15 (MEVGGDTAAPAPGGA) are compositionally biased toward low complexity. The interval 1–106 (MEVGGDTAAP…GGDPSDEEWR (106 aa)) is disordered. A phosphoserine mark is found at S59 and S61.

This sequence belongs to the MON1/SAND family. As to quaternary structure, interacts with CCNT2; down-regulates CCNT2-mediated activation of viral promoters during herpes simplex virus 1/HHV-1 infection. Found in a complex with RMC1, CCZ1 MON1A and MON1B.

In Homo sapiens (Human), this protein is Vacuolar fusion protein MON1 homolog B (MON1B).